The primary structure comprises 280 residues: uncharacterized protein (280 aa).

The N-terminal stretch at 1–21 (MRPVIKVGLSTASVYPLRAEA) is a signal peptide.

This sequence to M.tuberculosis Rv0498 and S.coelicolor SCO3347.

This is an uncharacterized protein from Mycobacterium leprae (strain TN).